A 459-amino-acid chain; its full sequence is ATP synthase subunit beta (459 aa).

Gly-149–Thr-156 serves as a coordination point for ATP.

The protein belongs to the ATPase alpha/beta chains family. F-type ATPases have 2 components, CF(1) - the catalytic core - and CF(0) - the membrane proton channel. CF(1) has five subunits: alpha(3), beta(3), gamma(1), delta(1), epsilon(1). CF(0) has three main subunits: a(1), b(2) and c(9-12). The alpha and beta chains form an alternating ring which encloses part of the gamma chain. CF(1) is attached to CF(0) by a central stalk formed by the gamma and epsilon chains, while a peripheral stalk is formed by the delta and b chains.

It localises to the cell inner membrane. It carries out the reaction ATP + H2O + 4 H(+)(in) = ADP + phosphate + 5 H(+)(out). In terms of biological role, produces ATP from ADP in the presence of a proton gradient across the membrane. The catalytic sites are hosted primarily by the beta subunits. This Pseudomonas syringae pv. tomato (strain ATCC BAA-871 / DC3000) protein is ATP synthase subunit beta.